The sequence spans 377 residues: Sodium-dependent organic anion transporter (377 aa).

The Extracellular portion of the chain corresponds to 1-29 (MRANCSSSSACPANSSEEELPVGLEVHGN). N-linked (GlcNAc...) asparagine glycosylation occurs at Asn-4. A helical membrane pass occupies residues 30 to 50 (LELVFTVVSTVMMGLLMFSLG). Over 51-67 (CSVEIRKLWSHIRRPWG) the chain is Cytoplasmic. A helical membrane pass occupies residues 68–88 (IAVGLLCQFGLMPFTAYLLAI). Residues 89–97 (SFSLKPVQA) lie on the Extracellular side of the membrane. A helical transmembrane segment spans residues 98-118 (IAVLIMGCCPGGTISNIFTFW). The Cytoplasmic portion of the chain corresponds to 119–133 (VDGDMDLSISMTTCS). The helical transmembrane segment at 134-154 (TVAALGMMPLCIYLYTWSWSL) threads the bilayer. Over 155-159 (QQNLT) the chain is Extracellular. A glycan (N-linked (GlcNAc...) asparagine) is linked at Asn-157. Residues 160–180 (IPYQNIGITLVCLTIPVAFGV) form a helical membrane-spanning segment. Residues 181 to 195 (YVNYRWPKQSKIILK) lie on the Cytoplasmic side of the membrane. Residues 196–216 (IGAVVGGVLLLVVAVAGVVLA) traverse the membrane as a helical segment. The Extracellular portion of the chain corresponds to 217–226 (KGSWNSDITL). The helical transmembrane segment at 227-247 (LTISFIFPLIGHVTGFLLALF) threads the bilayer. Over 248–266 (THQSWQRCRTISLETGAQN) the chain is Cytoplasmic. A helical transmembrane segment spans residues 267–285 (IQMCITMLQLSFTAEHLVQ). The Extracellular portion of the chain corresponds to 286–290 (MLSFP). The helical transmembrane segment at 291–311 (LAYGLFQLIDGFLIVAAYQTY) threads the bilayer. The Cytoplasmic segment spans residues 312–377 (KRRLKNKHGK…EPVGHITSCE (66 aa)).

It belongs to the bile acid:sodium symporter (BASS) (TC 2.A.28) family. Glycosylated. In terms of tissue distribution, highly expressed in testis, placenta and pancreas. Moderately expressed in heart, lung and mammary gland. Weakly expressed in brain, colon, kidney, liver, ovary, prostate, small intestine, spleen and thymus.

The protein resides in the membrane. It catalyses the reaction estrone 3-sulfate(out) + 2 Na(+)(out) = estrone 3-sulfate(in) + 2 Na(+)(in). The catalysed reaction is 17beta-estradiol 3-sulfate(out) + 2 Na(+)(out) = 17beta-estradiol 3-sulfate(in) + 2 Na(+)(in). It carries out the reaction dehydroepiandrosterone 3-sulfate(out) + 2 Na(+)(out) = dehydroepiandrosterone 3-sulfate(in) + 2 Na(+)(in). The enzyme catalyses androst-5-ene-diol 3-sulfate(out) + 2 Na(+)(out) = androst-5-ene-diol 3-sulfate(in) + 2 Na(+)(in). It catalyses the reaction pregnenolone sulfate(out) + 2 Na(+)(out) = pregnenolone sulfate(in) + 2 Na(+)(in). The catalysed reaction is taurolithocholate 3-sulfate(out) + 2 Na(+)(out) = taurolithocholate 3-sulfate(in) + 2 Na(+)(in). It carries out the reaction androsterone 3alpha-sulfate(out) + 2 Na(+)(out) = androsterone 3alpha-sulfate(in) + 2 Na(+)(in). The enzyme catalyses 5alpha-dihydrotestosterone sulfate(out) + 2 Na(+)(out) = 5alpha-dihydrotestosterone sulfate(in) + 2 Na(+)(in). It catalyses the reaction 17beta-estradiol 17-sulfate(out) + 2 Na(+)(out) = 17beta-estradiol 17-sulfate(in) + 2 Na(+)(in). The catalysed reaction is 17alpha-hydroxypregnenolone 3-sulfate(out) + 2 Na(+)(out) = 17alpha-hydroxypregnenolone 3-sulfate(in) + 2 Na(+)(in). It carries out the reaction epiandrosterone 3-sulfate(out) + 2 Na(+)(out) = epiandrosterone 3-sulfate(in) + 2 Na(+)(in). The enzyme catalyses epitestosterone 17-sulfate(out) + 2 Na(+)(out) = epitestosterone 17-sulfate(in) + 2 Na(+)(in). It catalyses the reaction testosterone 17-sulfate(out) + 2 Na(+)(out) = testosterone 17-sulfate(in) + 2 Na(+)(in). The catalysed reaction is 16alpha-hydroxydehydroepiandrosterone 3-sulfate(out) + 2 Na(+)(out) = 16alpha-hydroxydehydroepiandrosterone 3-sulfate(in) + 2 Na(+)(in). Functionally, transports sulfoconjugated steroid hormones from the extracellular compartment into the cytosol in a sodium-dependent manner without hydrolysis. Steroid sulfate hormones are commonly considered to be biologically inactive metabolites, that may be activated by steroid sulfatases into free steroids. May play an important role by delivering sulfoconjugated steroids to specific target cells in reproductive organs. May play a role transporting the estriol precursor 16alpha-hydroxydehydroepiandrosterone 3-sulfate (16a-OH-DHEAS) at the fetal blood vessel endothelium. Can also transport other sulfoconjugated molecules such as taurolithocholic acid-3-sulfate and sulfoconjugated pyrenes. The chain is Sodium-dependent organic anion transporter (SLC10A6) from Homo sapiens (Human).